The chain runs to 94 residues: Small ribosomal subunit protein uS19 (94 aa).

It belongs to the universal ribosomal protein uS19 family.

In terms of biological role, protein S19 forms a complex with S13 that binds strongly to the 16S ribosomal RNA. The chain is Small ribosomal subunit protein uS19 from Clostridium botulinum (strain Hall / ATCC 3502 / NCTC 13319 / Type A).